A 567-amino-acid polypeptide reads, in one-letter code: Arginine--tRNA ligase (567 aa).

The short motif at 121–131 (ANPNGPLHVGH) is the 'HIGH' region element.

This sequence belongs to the class-I aminoacyl-tRNA synthetase family.

Its subcellular location is the cytoplasm. It carries out the reaction tRNA(Arg) + L-arginine + ATP = L-arginyl-tRNA(Arg) + AMP + diphosphate. The polypeptide is Arginine--tRNA ligase (Methanococcoides burtonii (strain DSM 6242 / NBRC 107633 / OCM 468 / ACE-M)).